The chain runs to 159 residues: Ubiquitin-conjugating enzyme E2 variant 1B (159 aa).

The UBC core domain maps to 11–159; the sequence is PRNFRLLEEL…KGLVVKCCVM (149 aa).

It belongs to the ubiquitin-conjugating enzyme family. Heterodimer with UBC35 or UBC36. In terms of tissue distribution, expressed in roots, shoots, leaves, stems and flowers, but not in pollen.

Has no ubiquitin ligase activity on its own. The heterodimer with UBC catalyzes the synthesis of non-canonical poly-ubiquitin chains that are linked through 'Lys-63'. This type of poly-ubiquitination does not lead to protein degradation by the proteasome. Mediates transcriptional activation of target genes. May play a role in the control of progress through the cell cycle and differentiation. May play a role in the error-free DNA repair pathway and contributes to the survival of cells after DNA damage. The chain is Ubiquitin-conjugating enzyme E2 variant 1B (UEV1B) from Arabidopsis thaliana (Mouse-ear cress).